The primary structure comprises 306 residues: OVARIAN TUMOR DOMAIN-containing deubiquitinating enzyme 1 (306 aa).

Positions 81–295 (IGIRRTRGDG…PGHYDILYPK (215 aa)) constitute an OTU domain. D89 is an active-site residue. C92 functions as the Nucleophile in the catalytic mechanism. Active-site residues include H259 and H288.

Belongs to the peptidase C65 family.

The enzyme catalyses Thiol-dependent hydrolysis of ester, thioester, amide, peptide and isopeptide bonds formed by the C-terminal Gly of ubiquitin (a 76-residue protein attached to proteins as an intracellular targeting signal).. With respect to regulation, cleavage activities for 'Lys-48'- and 'Lys-63'-linked ubiquitin (UB) tetramers is inhibited by UB aldehyde and N-ethylmaleimide but not by the metalloprotease inhibitors 1,10-phenanthroline and EDTA, and the serine protease inhibitor phenylmethylsulfonyl fluoride. Hydrolase that can remove conjugated ubiquitin from proteins in vitro and may therefore play an important regulatory role at the level of protein turnover by preventing degradation. Cysteine protease with a preference for Met-1 and 'Lys-48' over 'Lys-63'-linked ubiquitin (UB) tetramers (e.g. Ub2, Ub3 and Ub4) as substrates. This is OVARIAN TUMOR DOMAIN-containing deubiquitinating enzyme 1 from Arabidopsis thaliana (Mouse-ear cress).